The chain runs to 347 residues: 4-hydroxy-2-oxovalerate aldolase (347 aa).

One can recognise a Pyruvate carboxyltransferase domain in the interval isoleucine 2–methionine 252. Arginine 10 to aspartate 11 is a binding site for substrate. Aspartate 11 is a Mn(2+) binding site. Histidine 14 (proton acceptor) is an active-site residue. Residues serine 164 and histidine 191 each coordinate substrate. Mn(2+) contacts are provided by histidine 191 and histidine 193.

It belongs to the 4-hydroxy-2-oxovalerate aldolase family.

The catalysed reaction is (S)-4-hydroxy-2-oxopentanoate = acetaldehyde + pyruvate. The chain is 4-hydroxy-2-oxovalerate aldolase from Burkholderia pseudomallei (strain 1106a).